The chain runs to 608 residues: Aspartate--tRNA(Asp/Asn) ligase (608 aa).

Glu-179 contacts L-aspartate. The segment at 203 to 206 is aspartate; sequence QLFK. An L-aspartate-binding site is contributed by Arg-225. ATP-binding positions include 225 to 227 and Gln-234; that span reads RDE. His-461 provides a ligand contact to L-aspartate. Glu-494 provides a ligand contact to ATP. Position 501 (Arg-501) interacts with L-aspartate. 546-549 lines the ATP pocket; it reads GLDR.

Belongs to the class-II aminoacyl-tRNA synthetase family. Type 1 subfamily. In terms of assembly, homodimer.

Its subcellular location is the cytoplasm. The enzyme catalyses tRNA(Asx) + L-aspartate + ATP = L-aspartyl-tRNA(Asx) + AMP + diphosphate. Functionally, aspartyl-tRNA synthetase with relaxed tRNA specificity since it is able to aspartylate not only its cognate tRNA(Asp) but also tRNA(Asn). Reaction proceeds in two steps: L-aspartate is first activated by ATP to form Asp-AMP and then transferred to the acceptor end of tRNA(Asp/Asn). This Psychrobacter arcticus (strain DSM 17307 / VKM B-2377 / 273-4) protein is Aspartate--tRNA(Asp/Asn) ligase.